We begin with the raw amino-acid sequence, 514 residues long: Folylpolyglutamate synthase (514 aa).

Gly82–Ser85 contributes to the ATP binding site. Mg(2+) contacts are provided by Ser107, Glu186, and His214. Residues Arg339 and Asp355 each contribute to the ATP site.

Belongs to the folylpolyglutamate synthase family. The cofactor is a monovalent cation.

It is found in the mitochondrion inner membrane. It localises to the mitochondrion matrix. The protein localises to the cytoplasm. The enzyme catalyses (6S)-5,6,7,8-tetrahydrofolyl-(gamma-L-Glu)(n) + L-glutamate + ATP = (6S)-5,6,7,8-tetrahydrofolyl-(gamma-L-Glu)(n+1) + ADP + phosphate + H(+). It participates in cofactor biosynthesis; tetrahydrofolylpolyglutamate biosynthesis. Its function is as follows. Catalyzes conversion of folates to polyglutamate derivatives allowing concentration of folate compounds in the cell and the intracellular retention of these cofactors, which are important substrates for most of the folate-dependent enzymes that are involved in one-carbon transfer reactions involved in purine, pyrimidine and amino acid synthesis. The protein is Folylpolyglutamate synthase (MET7) of Candida albicans (Yeast).